Here is a 181-residue protein sequence, read N- to C-terminus: Ferritin heavy chain (181 aa).

Methionine 1 bears the N-acetylmethionine mark. The residue at position 2 (threonine 2) is an N-acetylthreonine; in Ferritin heavy chain, N-terminally processed. Positions 11-160 (QNYHQDSEAA…DHITNLRKMG (150 aa)) constitute a Ferritin-like diiron domain. Residues glutamate 28, glutamate 63, histidine 66, glutamate 108, and glutamine 142 each contribute to the Fe cation site. Phosphoserine is present on serine 179.

It belongs to the ferritin family. In terms of assembly, oligomer of 24 subunits. There are two types of subunits: L (light) chain and H (heavy) chain. The major chain can be light or heavy, depending on the species and tissue type. The functional molecule forms a roughly spherical shell with a diameter of 12 nm and contains a central cavity into which the insoluble mineral iron core is deposited. Interacts with NCOA4; NCOA4 promotes targeting of the iron-binding ferritin complex to autolysosomes following starvation or iron depletion.

It localises to the cytoplasm. The protein localises to the lysosome. Its subcellular location is the cytoplasmic vesicle. It is found in the autophagosome. It carries out the reaction 4 Fe(2+) + O2 + 4 H(+) = 4 Fe(3+) + 2 H2O. Stores iron in a soluble, non-toxic, readily available form. Important for iron homeostasis. Has ferroxidase activity. Iron is taken up in the ferrous form and deposited as ferric hydroxides after oxidation. Also plays a role in delivery of iron to cells. Mediates iron uptake in capsule cells of the developing kidney. Delivery to lysosomes is mediated by the cargo receptor NCOA4 for autophagic degradation and release of iron. The protein is Ferritin heavy chain (FTH1) of Bos taurus (Bovine).